The sequence spans 262 residues: Ribosomal RNA small subunit methyltransferase A (262 aa).

His-19, Leu-21, Gly-44, Glu-65, Asp-90, and Asn-109 together coordinate S-adenosyl-L-methionine. The tract at residues 218–246 (LPNNLPGPLRERAEEALAGLGHGPDARAE) is disordered.

It belongs to the class I-like SAM-binding methyltransferase superfamily. rRNA adenine N(6)-methyltransferase family. RsmA subfamily.

It is found in the cytoplasm. The enzyme catalyses adenosine(1518)/adenosine(1519) in 16S rRNA + 4 S-adenosyl-L-methionine = N(6)-dimethyladenosine(1518)/N(6)-dimethyladenosine(1519) in 16S rRNA + 4 S-adenosyl-L-homocysteine + 4 H(+). Functionally, specifically dimethylates two adjacent adenosines (A1518 and A1519) in the loop of a conserved hairpin near the 3'-end of 16S rRNA in the 30S particle. May play a critical role in biogenesis of 30S subunits. This chain is Ribosomal RNA small subunit methyltransferase A, found in Rubrobacter xylanophilus (strain DSM 9941 / JCM 11954 / NBRC 16129 / PRD-1).